The following is a 361-amino-acid chain: tRNA-specific 2-thiouridylase MnmA (361 aa).

ATP is bound by residues 10–17 (GMSGGVDS) and Met-36. The active-site Nucleophile is the Cys-104. A disulfide bridge links Cys-104 with Cys-202. Gly-128 is an ATP binding site. The segment at 152-154 (KDQ) is interaction with tRNA. Cys-202 serves as the catalytic Cysteine persulfide intermediate. The segment at 308 to 309 (RY) is interaction with tRNA.

It belongs to the MnmA/TRMU family.

It localises to the cytoplasm. The enzyme catalyses S-sulfanyl-L-cysteinyl-[protein] + uridine(34) in tRNA + AH2 + ATP = 2-thiouridine(34) in tRNA + L-cysteinyl-[protein] + A + AMP + diphosphate + H(+). Its function is as follows. Catalyzes the 2-thiolation of uridine at the wobble position (U34) of tRNA, leading to the formation of s(2)U34. The chain is tRNA-specific 2-thiouridylase MnmA from Clostridioides difficile (strain 630) (Peptoclostridium difficile).